Reading from the N-terminus, the 446-residue chain is Argininosuccinate lyase (446 aa).

It belongs to the lyase 1 family. Argininosuccinate lyase subfamily.

The protein resides in the cytoplasm. It carries out the reaction 2-(N(omega)-L-arginino)succinate = fumarate + L-arginine. Its pathway is amino-acid biosynthesis; L-arginine biosynthesis; L-arginine from L-ornithine and carbamoyl phosphate: step 3/3. The chain is Argininosuccinate lyase from Bacteroides thetaiotaomicron (strain ATCC 29148 / DSM 2079 / JCM 5827 / CCUG 10774 / NCTC 10582 / VPI-5482 / E50).